A 358-amino-acid chain; its full sequence is MGNASNDSQSEDCETRQWLPPGESPAISSVMFSAGVLGNLIALALLARRWRGDVGCSAGRRSSLSLFHVLVTELVFTDLLGTCLISPVVLASYARNQTLVALAPESRACTYFAFAMTFFSLATMLMLFAMALERYLSIGHPYFYQRRVSRSGGLAVLPVIYAVSLLFCSLPLLDYGQYVQYCPGTWCFIRHGRTAYLQLYATLLLLLIVSVLACNFSVILNLIRMHRRSRRSRCGPSLGSGRGGPGARRRGERVSMAEETDHLILLAIMTITFAVCSLPFTIFAYMNETSSRKEKWDLQALRFLSINSIIDPWVFAILRPPVLRLMRSVLCCRISLRTQDATQTSCSTQSDASKQADL.

Topologically, residues 1–23 are extracellular; the sequence is MGNASNDSQSEDCETRQWLPPGE. N-linked (GlcNAc...) asparagine glycans are attached at residues Asn-3 and Asn-6. The helical transmembrane segment at 24–47 threads the bilayer; the sequence is SPAISSVMFSAGVLGNLIALALLA. Residues 48–65 lie on the Cytoplasmic side of the membrane; sequence RRWRGDVGCSAGRRSSLS. A helical transmembrane segment spans residues 66 to 91; that stretch reads LFHVLVTELVFTDLLGTCLISPVVLA. Residues 92-111 lie on the Extracellular side of the membrane; sequence SYARNQTLVALAPESRACTY. The N-linked (GlcNAc...) asparagine glycan is linked to Asn-96. A disulfide bond links Cys-109 and Cys-187. A helical transmembrane segment spans residues 112 to 132; it reads FAFAMTFFSLATMLMLFAMAL. Residues 133–151 are Cytoplasmic-facing; it reads ERYLSIGHPYFYQRRVSRS. A helical membrane pass occupies residues 152 to 176; it reads GGLAVLPVIYAVSLLFCSLPLLDYG. The Extracellular segment spans residues 177 to 198; the sequence is QYVQYCPGTWCFIRHGRTAYLQ. The helical transmembrane segment at 199 to 223 threads the bilayer; the sequence is LYATLLLLLIVSVLACNFSVILNLI. Residues 224–262 lie on the Cytoplasmic side of the membrane; it reads RMHRRSRRSRCGPSLGSGRGGPGARRRGERVSMAEETDH. The interval 231–253 is disordered; the sequence is RSRCGPSLGSGRGGPGARRRGER. Residues 263–286 traverse the membrane as a helical segment; sequence LILLAIMTITFAVCSLPFTIFAYM. An N-linked (GlcNAc...) asparagine glycan is attached at Asn-287. At 287–299 the chain is on the extracellular side; the sequence is NETSSRKEKWDLQ. Residues 300-323 traverse the membrane as a helical segment; it reads ALRFLSINSIIDPWVFAILRPPVL. Residues 324 to 358 lie on the Cytoplasmic side of the membrane; the sequence is RLMRSVLCCRISLRTQDATQTSCSTQSDASKQADL.

Belongs to the G-protein coupled receptor 1 family. As to expression, placenta and lung.

Its subcellular location is the cell membrane. Its function is as follows. Receptor for prostaglandin E2 (PGE2). The activity of this receptor is mediated by G(s) proteins that stimulate adenylate cyclase. The subsequent raise in intracellular cAMP is responsible for the relaxing effect of this receptor on smooth muscle. The sequence is that of Prostaglandin E2 receptor EP2 subtype (PTGER2) from Homo sapiens (Human).